The sequence spans 303 residues: Putative S-adenosyl-L-methionine-dependent methyltransferase ML2020 (303 aa).

Residues Asp130 and 159-160 contribute to the S-adenosyl-L-methionine site; that span reads DL.

The protein belongs to the UPF0677 family.

Functionally, exhibits S-adenosyl-L-methionine-dependent methyltransferase activity. In Mycobacterium leprae (strain TN), this protein is Putative S-adenosyl-L-methionine-dependent methyltransferase ML2020.